The primary structure comprises 439 residues: Xylose isomerase (439 aa).

Active-site residues include histidine 101 and aspartate 104. Residues glutamate 232, glutamate 268, histidine 271, aspartate 296, aspartate 307, aspartate 309, and aspartate 339 each coordinate Mg(2+).

It belongs to the xylose isomerase family. Homotetramer. Mg(2+) serves as cofactor.

Its subcellular location is the cytoplasm. It carries out the reaction alpha-D-xylose = alpha-D-xylulofuranose. The protein is Xylose isomerase of Haemophilus influenzae (strain PittEE).